The following is a 102-amino-acid chain: NADH-quinone oxidoreductase subunit K (102 aa).

The next 3 membrane-spanning stretches (helical) occupy residues L5–L25, I31–F51, and V62–L82.

The protein belongs to the complex I subunit 4L family. As to quaternary structure, NDH-1 is composed of 14 different subunits. Subunits NuoA, H, J, K, L, M, N constitute the membrane sector of the complex.

Its subcellular location is the cell inner membrane. The enzyme catalyses a quinone + NADH + 5 H(+)(in) = a quinol + NAD(+) + 4 H(+)(out). Functionally, NDH-1 shuttles electrons from NADH, via FMN and iron-sulfur (Fe-S) centers, to quinones in the respiratory chain. The immediate electron acceptor for the enzyme in this species is believed to be ubiquinone. Couples the redox reaction to proton translocation (for every two electrons transferred, four hydrogen ions are translocated across the cytoplasmic membrane), and thus conserves the redox energy in a proton gradient. This Bordetella parapertussis (strain 12822 / ATCC BAA-587 / NCTC 13253) protein is NADH-quinone oxidoreductase subunit K.